The following is a 170-amino-acid chain: Bifunctional protein PyrR (170 aa).

The PRPP-binding motif lies at 90–102 (LVLVDDVLMSGRT).

This sequence belongs to the purine/pyrimidine phosphoribosyltransferase family. PyrR subfamily.

The catalysed reaction is UMP + diphosphate = 5-phospho-alpha-D-ribose 1-diphosphate + uracil. Functionally, regulates the transcription of the pyrimidine nucleotide (pyr) operon in response to exogenous pyrimidines. Also displays a weak uracil phosphoribosyltransferase activity which is not physiologically significant. In Pseudomonas aeruginosa (strain LESB58), this protein is Bifunctional protein PyrR.